The sequence spans 371 residues: Ferrochelatase (371 aa).

The Fe cation site is built by His218 and Glu299.

The protein belongs to the ferrochelatase family.

It is found in the cytoplasm. The catalysed reaction is heme b + 2 H(+) = protoporphyrin IX + Fe(2+). It functions in the pathway porphyrin-containing compound metabolism; protoheme biosynthesis; protoheme from protoporphyrin-IX: step 1/1. Its function is as follows. Catalyzes the ferrous insertion into protoporphyrin IX. The chain is Ferrochelatase from Ralstonia pickettii (strain 12J).